Reading from the N-terminus, the 241-residue chain is Adenylate kinase 3 (241 aa).

38–43 (GCGKGT) is a binding site for ATP. The NMP stretch occupies residues 58-87 (ATGDMLRAAVAAKTPLGIKAKEAMDKGELV). AMP-binding positions include T59, R64, 85–87 (ELV), 113–116 (GFPR), and Q120. An LID region spans residues 154–191 (GRWIHPSSGRSYHTKFAPPKTPGLDDVTGEPLIQRKDD). R155 contributes to the ATP binding site. Residues R188 and R199 each contribute to the AMP site.

This sequence belongs to the adenylate kinase family.

The protein resides in the cytoplasm. It catalyses the reaction AMP + ATP = 2 ADP. Catalyzes the reversible transfer of the terminal phosphate group between ATP and AMP. Plays an important role in cellular energy homeostasis and in adenine nucleotide metabolism. This is Adenylate kinase 3 (ADK-A) from Oryza sativa subsp. japonica (Rice).